We begin with the raw amino-acid sequence, 230 residues long: Small ribosomal subunit protein uS2 (230 aa).

Belongs to the universal ribosomal protein uS2 family.

The chain is Small ribosomal subunit protein uS2 from Prochlorococcus marinus (strain NATL2A).